A 358-amino-acid polypeptide reads, in one-letter code: 4-hydroxy-3-methylbut-2-en-1-yl diphosphate synthase (flavodoxin) (358 aa).

Cys265, Cys268, Cys300, and Glu307 together coordinate [4Fe-4S] cluster.

This sequence belongs to the IspG family. It depends on [4Fe-4S] cluster as a cofactor.

It catalyses the reaction (2E)-4-hydroxy-3-methylbut-2-enyl diphosphate + oxidized [flavodoxin] + H2O + 2 H(+) = 2-C-methyl-D-erythritol 2,4-cyclic diphosphate + reduced [flavodoxin]. It functions in the pathway isoprenoid biosynthesis; isopentenyl diphosphate biosynthesis via DXP pathway; isopentenyl diphosphate from 1-deoxy-D-xylulose 5-phosphate: step 5/6. In terms of biological role, converts 2C-methyl-D-erythritol 2,4-cyclodiphosphate (ME-2,4cPP) into 1-hydroxy-2-methyl-2-(E)-butenyl 4-diphosphate. The sequence is that of 4-hydroxy-3-methylbut-2-en-1-yl diphosphate synthase (flavodoxin) from Maridesulfovibrio salexigens (strain ATCC 14822 / DSM 2638 / NCIMB 8403 / VKM B-1763) (Desulfovibrio salexigens).